Here is a 317-residue protein sequence, read N- to C-terminus: Apolipoprotein E (317 aa).

The first 18 residues, 1–18 (MKVLWAALLVTFLAGCQA), serve as a signal peptide directing secretion. 8 repeat units span residues 80–101 (TLMD…EQLS), 102–123 (PVAE…ARLG), 124–145 (ADME…AMLG), 146–167 (QSTE…KRLL), 168–189 (RDAD…EGAE), 190–211 (RGVS…VRAA), 212–233 (TVGS…ERLR), and 234–255 (ARME…EQVA). Positions 80-255 (TLMDETMKEL…RLDEVKEQVA (176 aa)) are 8 X 22 AA approximate tandem repeats. Methionine 143 carries the post-translational modification Methionine sulfoxide. At serine 147 the chain carries Phosphoserine. Residues 158-168 (HLRKLRKRLLR) form an LDL and other lipoprotein receptors binding region. 162-165 (LRKR) contributes to the heparin binding site. Residues 210–290 (AATVGSLASQ…SWFEPLVEDM (81 aa)) form a lipid-binding and lipoprotein association region. Threonine 212 carries O-linked (GalNAc...) threonine glycosylation. 229–236 (GERLRARM) contributes to the heparin binding site. The segment at 266 to 317 (QQISLQAEAFQARLKSWFEPLVEDMQRQWAGLVEKVQAAVGASTAPVPSDNH) is homooligomerization. The interval 278 to 290 (RLKSWFEPLVEDM) is specificity for association with VLDL.

It belongs to the apolipoprotein A1/A4/E family. Homotetramer. May interact with ABCA1; functionally associated with ABCA1 in the biogenesis of HDLs. May interact with APP/A4 amyloid-beta peptide; the interaction is extremely stable in vitro but its physiological significance is unclear. May interact with MAPT. May interact with MAP2. In the cerebrospinal fluid, interacts with secreted SORL1. Interacts with PMEL; this allows the loading of PMEL luminal fragment on ILVs to induce fibril nucleation. APOE exists as multiple glycosylated and sialylated glycoforms within cells and in plasma. The extent of glycosylation and sialylation are tissue and context specific. In terms of processing, glycated in plasma VLDL. Post-translationally, phosphorylated by FAM20C in the extracellular medium.

Its subcellular location is the secreted. It is found in the extracellular space. The protein resides in the extracellular matrix. It localises to the extracellular vesicle. The protein localises to the endosome. Its subcellular location is the multivesicular body. APOE is an apolipoprotein, a protein associating with lipid particles, that mainly functions in lipoprotein-mediated lipid transport between organs via the plasma and interstitial fluids. APOE is a core component of plasma lipoproteins and is involved in their production, conversion and clearance. Apolipoproteins are amphipathic molecules that interact both with lipids of the lipoprotein particle core and the aqueous environment of the plasma. As such, APOE associates with chylomicrons, chylomicron remnants, very low density lipoproteins (VLDL) and intermediate density lipoproteins (IDL) but shows a preferential binding to high-density lipoproteins (HDL). It also binds a wide range of cellular receptors including the LDL receptor/LDLR, the LDL receptor-related proteins LRP1, LRP2 and LRP8 and the very low-density lipoprotein receptor/VLDLR that mediate the cellular uptake of the APOE-containing lipoprotein particles. Finally, APOE also has a heparin-binding activity and binds heparan-sulfate proteoglycans on the surface of cells, a property that supports the capture and the receptor-mediated uptake of APOE-containing lipoproteins by cells. A main function of APOE is to mediate lipoprotein clearance through the uptake of chylomicrons, VLDLs, and HDLs by hepatocytes. APOE is also involved in the biosynthesis by the liver of VLDLs as well as their uptake by peripheral tissues ensuring the delivery of triglycerides and energy storage in muscle, heart and adipose tissues. By participating in the lipoprotein-mediated distribution of lipids among tissues, APOE plays a critical role in plasma and tissues lipid homeostasis. APOE is also involved in two steps of reverse cholesterol transport, the HDLs-mediated transport of cholesterol from peripheral tissues to the liver, and thereby plays an important role in cholesterol homeostasis. First, it is functionally associated with ABCA1 in the biogenesis of HDLs in tissues. Second, it is enriched in circulating HDLs and mediates their uptake by hepatocytes. APOE also plays an important role in lipid transport in the central nervous system, regulating neuron survival and sprouting. This chain is Apolipoprotein E (APOE), found in Macaca nemestrina (Pig-tailed macaque).